The following is a 347-amino-acid chain: NADH-ubiquinone oxidoreductase chain 2 (347 aa).

10 helical membrane passes run 3 to 23, 25 to 45, 66 to 86, 93 to 115, 149 to 169, 178 to 198, 201 to 221, 237 to 257, 274 to 294, and 325 to 345; these read PPILIIIMATIMTGTMIVMLS, HWLLIWIGFEMNMLAIIPILM, ASMLLMMGVTINLLYSGQWVI, IASIMMTTALTMKLGLSPFHFWV, INTNLLMLMALTSVLVGGWGG, IMAYSSIAHMGWMAAIITYNP, MILNLTLYILMTLSTFMLFML, FPLITSMILILMLSLGGLPPL, NMIIIPTLMAITALLNLYFYL, and LLPPLIITSTMLLPLTPMLSV.

The protein belongs to the complex I subunit 2 family. In terms of assembly, core subunit of respiratory chain NADH dehydrogenase (Complex I) which is composed of 45 different subunits. Interacts with TMEM242.

The protein localises to the mitochondrion inner membrane. It carries out the reaction a ubiquinone + NADH + 5 H(+)(in) = a ubiquinol + NAD(+) + 4 H(+)(out). Its function is as follows. Core subunit of the mitochondrial membrane respiratory chain NADH dehydrogenase (Complex I) which catalyzes electron transfer from NADH through the respiratory chain, using ubiquinone as an electron acceptor. Essential for the catalytic activity and assembly of complex I. In Canis lupus (Gray wolf), this protein is NADH-ubiquinone oxidoreductase chain 2.